A 322-amino-acid chain; its full sequence is UDP-N-acetylenolpyruvoylglucosamine reductase (322 aa).

The region spanning 36–202 (RAGGPAQVLF…TSVLFEGVPG (167 aa)) is the FAD-binding PCMH-type domain. The active site involves arginine 182. Residue serine 231 is the Proton donor of the active site. Residue glutamate 301 is part of the active site.

The protein belongs to the MurB family. It depends on FAD as a cofactor.

Its subcellular location is the cytoplasm. It carries out the reaction UDP-N-acetyl-alpha-D-muramate + NADP(+) = UDP-N-acetyl-3-O-(1-carboxyvinyl)-alpha-D-glucosamine + NADPH + H(+). Its pathway is cell wall biogenesis; peptidoglycan biosynthesis. Its function is as follows. Cell wall formation. This Brucella canis (strain ATCC 23365 / NCTC 10854 / RM-666) protein is UDP-N-acetylenolpyruvoylglucosamine reductase.